The chain runs to 331 residues: D-lactate dehydrogenase (331 aa).

NAD(+) contacts are provided by residues His-155 to Ile-156, Asp-175, Val-206 to Pro-207, Asn-212, Ala-233 to Arg-235, and Asp-259. Arg-235 is an active-site residue. Glu-264 is an active-site residue. His-296 functions as the Proton donor in the catalytic mechanism.

Belongs to the D-isomer specific 2-hydroxyacid dehydrogenase family. In terms of assembly, homodimer.

It carries out the reaction (R)-lactate + NAD(+) = pyruvate + NADH + H(+). In Leuconostoc mesenteroides subsp. cremoris, this protein is D-lactate dehydrogenase.